A 496-amino-acid polypeptide reads, in one-letter code: Cytochrome P450 71D180 (496 aa).

A helical; Signal-anchor for type II membrane protein membrane pass occupies residues 1–21 (MDISISWVVIIVFVLSYLILM). Cys435 serves as a coordination point for heme.

This sequence belongs to the cytochrome P450 family. It depends on heme as a cofactor. As to expression, mostly expressed in flowers and, to a lower extent, in leaves, especially in glandular trichomes.

It localises to the membrane. The catalysed reaction is (4R)-limonene + reduced [NADPH--hemoprotein reductase] + O2 = (1R,5S)-carveol + oxidized [NADPH--hemoprotein reductase] + H2O + H(+). It carries out the reaction (4S)-limonene + reduced [NADPH--hemoprotein reductase] + O2 = (1S,5R)-carveol + oxidized [NADPH--hemoprotein reductase] + H2O + H(+). It catalyses the reaction gamma-terpinene + 2 reduced [NADPH--hemoprotein reductase] + 2 O2 = carvacrol + 2 oxidized [NADPH--hemoprotein reductase] + 3 H2O + 2 H(+). The protein operates within secondary metabolite biosynthesis; terpenoid biosynthesis. In terms of biological role, involved in the biosynthesis of phenolic monoterpenes natural products thymol and carvacrol which have a broad range of biological activities acting as antimicrobial compounds, insecticides, antioxidants and pharmaceutical agents. Catalyzes the C2-hydroxylation of gamma-terpinene to produce carvacrol. Mediates also the C6-hydroxylation of (4S)-limonene and (4R)-limonene to form carveol. The chain is Cytochrome P450 71D180 from Thymus vulgaris (Thyme).